Consider the following 225-residue polypeptide: UPF0758 protein Spea_3837 (225 aa).

The region spanning 102-224 (ILSDPDLTRD…IVSFAERGWI (123 aa)) is the MPN domain. Residues histidine 173, histidine 175, and aspartate 186 each contribute to the Zn(2+) site. A JAMM motif motif is present at residues 173 to 186 (HNHPSGIAEPSTAD).

This sequence belongs to the UPF0758 family.

The protein is UPF0758 protein Spea_3837 of Shewanella pealeana (strain ATCC 700345 / ANG-SQ1).